The chain runs to 743 residues: 1,4-alpha-glucan branching enzyme GlgB 2 (743 aa).

The disordered stretch occupies residues 1 to 23 (MSERQGGQEQRTEADGMTTEGIS). Catalysis depends on D422, which acts as the Nucleophile. E475 functions as the Proton donor in the catalytic mechanism.

This sequence belongs to the glycosyl hydrolase 13 family. GlgB subfamily. In terms of assembly, monomer.

It carries out the reaction Transfers a segment of a (1-&gt;4)-alpha-D-glucan chain to a primary hydroxy group in a similar glucan chain.. It functions in the pathway glycan biosynthesis; glycogen biosynthesis. Catalyzes the formation of the alpha-1,6-glucosidic linkages in glycogen by scission of a 1,4-alpha-linked oligosaccharide from growing alpha-1,4-glucan chains and the subsequent attachment of the oligosaccharide to the alpha-1,6 position. The chain is 1,4-alpha-glucan branching enzyme GlgB 2 from Xanthomonas euvesicatoria pv. vesicatoria (strain 85-10) (Xanthomonas campestris pv. vesicatoria).